Here is a 431-residue protein sequence, read N- to C-terminus: Indole diterpene prenyltransferase nodD1 (431 aa).

L-tryptophan is bound at residue 85-86 (FI). Residues Arg107, Lys194, Arg268, Lys270, Tyr272, and Tyr353 each coordinate substrate.

The protein belongs to the tryptophan dimethylallyltransferase family.

Its pathway is secondary metabolite biosynthesis. Functionally, indole diterpene prenyltransferase; part of the gene cluster that mediates the biosynthesis of the indole diterpenes nodulisporic acids (NA). Nodulisporic acid A (NAA) and its chemically modified derivatives are of particular significance because of their highly potent insecticidal activity against blood-feeding arthropods and lack of observable adverse effects on mammals, in particular the tremogenicity associated with the paspaline-derived IDTs is not observed. The geranylgeranyl diphosphate (GGPP) synthase ggs1, localized outside of the cluster, is proposed to catalyze the first step in nodulisporic acid biosynthesis via conversion of farnesyl pyrophosphate and isopentyl pyrophosphate into geranylgeranyl pyrophosphate (GGPP). Condensation of indole-3-glycerol phosphate with GGPP by the prenyl transferase nodC then forms 3-geranylgeranylindole (3-GGI). Epoxidation by the FAD-dependent monooxygenase nodM leads to a single-epoxidized-GGI that is substrate of the terpene cyclase nodB for cyclization to yield emindole SB. The terminal methyl carbon, C28, of emindole SB is then oxidized by the cytochrome P450 monooxygenase nodW to produce nodulisporic acid F (NAF), the pentacyclic core of NAA. NAF is converted to nodulisporic acid E (NAE) via prenylation. This step is probably performed by one of the indole diterpene prenyltransferases nodD1 or nodD2. Several oxidation steps performed by the FAD-linked oxidoreductase nodO and one of the cytochrome P450 monooxygenase nodR, nodX or nodZ further convert NAE to nodulisporic acid D (NAD). NAD is substrate of cytochrome P450 monooxygenase nodJ to produce the precursor of nodulisporic acid C (NAC), converted to NAC by one of the indole diterpene prenyltransferases nodD1 or nodD2. The FAD-dependent monooxygenase nodY2 then oxidizes NAC to nodulisporic acid B (NAB). Finally NAB is converted to NAA by one of the cytochrome P450 monooxygenases nodR, nodX or nodZ. The protein is Indole diterpene prenyltransferase nodD1 of Hypoxylon pulicicidum.